Reading from the N-terminus, the 328-residue chain is UPF0194 membrane protein YPTS_1292 (328 aa).

An N-terminal signal peptide occupies residues 1–22; sequence MNRKKIIVAAVIVALLATLAYG. 2 coiled-coil regions span residues 80–109 and 142–209; these read YLNALKQAQANVQSAQAQLALLKAGYREEE and AVSA…ILLA.

Belongs to the UPF0194 family.

The protein resides in the periplasm. In Yersinia pseudotuberculosis serotype IB (strain PB1/+), this protein is UPF0194 membrane protein YPTS_1292.